A 447-amino-acid polypeptide reads, in one-letter code: GTPase Der (447 aa).

2 EngA-type G domains span residues 3 to 167 (PVIA…ALPE) and 180 to 353 (IRLA…KSAN). GTP is bound by residues 9–16 (GRPNVGKS), 56–60 (DTGGF), 119–122 (NKAE), 186–193 (GRPNVGKS), 233–237 (DTAGL), and 298–301 (NKWD). The KH-like domain maps to 354–438 (RKMPTPVLTR…PLRIEMKTSS (85 aa)).

The protein belongs to the TRAFAC class TrmE-Era-EngA-EngB-Septin-like GTPase superfamily. EngA (Der) GTPase family. As to quaternary structure, associates with the 50S ribosomal subunit.

Functionally, GTPase that plays an essential role in the late steps of ribosome biogenesis. The protein is GTPase Der of Acidovorax sp. (strain JS42).